We begin with the raw amino-acid sequence, 120 residues long: Large ribosomal subunit protein bL20 (120 aa).

It belongs to the bacterial ribosomal protein bL20 family.

In terms of biological role, binds directly to 23S ribosomal RNA and is necessary for the in vitro assembly process of the 50S ribosomal subunit. It is not involved in the protein synthesizing functions of that subunit. The polypeptide is Large ribosomal subunit protein bL20 (Methylobacillus flagellatus (strain ATCC 51484 / DSM 6875 / VKM B-1610 / KT)).